We begin with the raw amino-acid sequence, 114 residues long: uncharacterized protein (114 aa).

Its function is as follows. May be associated with transposition functions of transposon Tn903. This is an uncharacterized protein from Escherichia coli.